A 494-amino-acid polypeptide reads, in one-letter code: Chromosomal replication initiator protein DnaA (494 aa).

The tract at residues 1–103 (MTTDPDPPFV…PVSDESDSGS (103 aa)) is domain I, interacts with DnaA modulators. Positions 94 to 117 (PVSDESDSGSVASPAPVAAADPDD) are disordered. Over residues 101-113 (SGSVASPAPVAAA) the composition is skewed to low complexity. Residues 104–153 (VASPAPVAAADPDDDVVDDDLAARASAEESWPSYFTNRANRAAEDDATSV) are domain II. The domain III, AAA+ region stretch occupies residues 154–370 (NLNRRYTFDT…GALIRVTAFA (217 aa)). ATP contacts are provided by Gly-198, Gly-200, Lys-201, and Thr-202. Residues 371–494 (SLNKTPIDKS…TTRIRQRAKR (124 aa)) are domain IV, binds dsDNA.

Belongs to the DnaA family. In terms of assembly, oligomerizes as a right-handed, spiral filament on DNA at oriC.

It is found in the cytoplasm. Functionally, plays an essential role in the initiation and regulation of chromosomal replication. ATP-DnaA binds to the origin of replication (oriC) to initiate formation of the DNA replication initiation complex once per cell cycle. Binds the DnaA box (a 9 base pair repeat at the origin) and separates the double-stranded (ds)DNA. Forms a right-handed helical filament on oriC DNA; dsDNA binds to the exterior of the filament while single-stranded (ss)DNA is stabiized in the filament's interior. The ATP-DnaA-oriC complex binds and stabilizes one strand of the AT-rich DNA unwinding element (DUE), permitting loading of DNA polymerase. After initiation quickly degrades to an ADP-DnaA complex that is not apt for DNA replication. Binds acidic phospholipids. The chain is Chromosomal replication initiator protein DnaA from Mycolicibacterium vanbaalenii (strain DSM 7251 / JCM 13017 / BCRC 16820 / KCTC 9966 / NRRL B-24157 / PYR-1) (Mycobacterium vanbaalenii).